The chain runs to 375 residues: MNTSHLLALLLPKSPQGENRSKPLGTPYNFSEHCQDSVDVMVFIVTSYSIETVVGVLGNLCLMCVTVRQKEKANVTNLLIANLAFSDFLMCLLCQPLTAVYTIMDYWIFGETLCKMSAFIQCMSVTVSILSLVLVALERHQLIINPTGWKPSISQAYLGIVLIWVIACVLSLPFLANSILENVFHKNHSKALEFLADKVVCTESWPLAHHRTIYTTFLLLFQYCLPLGFILVCYARIYRRLQRQGRVFHKGTYSLRAGHMKQVNVVLVVMVVAFAVLWLPLHVFNSLEDWHHEAIPICHGNLIFLVCHLLAMASTCVNPFIYGFLNTNFKKEIKALVLTCQQSAPLEESEHLPLSTVHTEVSKGSLRLSGRSNPI.

The Extracellular segment spans residues 1 to 39; sequence MNTSHLLALLLPKSPQGENRSKPLGTPYNFSEHCQDSVD. Asn2, Asn19, and Asn29 each carry an N-linked (GlcNAc...) asparagine glycan. A helical transmembrane segment spans residues 40-60; that stretch reads VMVFIVTSYSIETVVGVLGNL. The Cytoplasmic portion of the chain corresponds to 61–87; that stretch reads CLMCVTVRQKEKANVTNLLIANLAFSD. Residues 88-108 traverse the membrane as a helical segment; sequence FLMCLLCQPLTAVYTIMDYWI. Residues 109 to 116 lie on the Extracellular side of the membrane; sequence FGETLCKM. An intrachain disulfide couples Cys114 to Cys201. The chain crosses the membrane as a helical span at residues 117–137; it reads SAFIQCMSVTVSILSLVLVAL. The Cytoplasmic portion of the chain corresponds to 138–155; the sequence is ERHQLIINPTGWKPSISQ. Residues 156-176 traverse the membrane as a helical segment; it reads AYLGIVLIWVIACVLSLPFLA. Topologically, residues 177–212 are extracellular; sequence NSILENVFHKNHSKALEFLADKVVCTESWPLAHHRT. A glycan (N-linked (GlcNAc...) asparagine) is linked at Asn187. Residues 213–233 traverse the membrane as a helical segment; it reads IYTTFLLLFQYCLPLGFILVC. The Cytoplasmic portion of the chain corresponds to 234-263; that stretch reads YARIYRRLQRQGRVFHKGTYSLRAGHMKQV. A helical transmembrane segment spans residues 264 to 284; that stretch reads NVVLVVMVVAFAVLWLPLHVF. Topologically, residues 285–301 are extracellular; that stretch reads NSLEDWHHEAIPICHGN. The chain crosses the membrane as a helical span at residues 302-322; sequence LIFLVCHLLAMASTCVNPFIY. Topologically, residues 323 to 375 are cytoplasmic; it reads GFLNTNFKKEIKALVLTCQQSAPLEESEHLPLSTVHTEVSKGSLRLSGRSNPI. Cys340 is lipidated: S-palmitoyl cysteine.

It belongs to the G-protein coupled receptor 1 family.

The protein localises to the cell membrane. G protein-coupled receptor for PPY/pancreatic polypeptide/PP, NPY/neuropeptide Y and PYY/peptide YY that is negatively coupled to cAMP. The rank order of affinity for these polypeptides and their derivatives is PP, PP (2-36) and [Ile-31, Gln-34] PP &gt; [Pro-34] PYY &gt; PYY and [Leu-31, Pro-34] NPY &gt; NPY &gt; PYY (3-36) and NPY (2-36) &gt; PP (13-36) &gt; PP (31-36) &gt; NPY free acid. In Homo sapiens (Human), this protein is Neuropeptide Y receptor type 4-2.